The sequence spans 366 residues: DTGPQGPQGVAGPPGIDGAKGDKGECFYPPPPTCPTCPAGPPGAPGPQGAPGAPGAPGLPGPAGPQGPKGDKGLPGNDGQPGAPGAPGYDGAKGDKGDTGAPGPQGPKGDQGPKGDQGYKGDAGLPGQPGQTGAPGKDGQDGAKGDKGDQGPAGTPGAPGKDGAQGPAGPAGPAGPAGPVGPTGPQGPQGPKGDVGPQGPQGAPGSNGAVVYIRWGNNVCPAGETNVYSGHIVESSNANDANGDYLCLPDTHNAYPPQTQNPLLNLKDVTDSYGKTVPCVACLASGRSTVFTFPDNTVCPYGWTTEYVGYEAANPKWPGQNLCVDTYFGDKLSQTPCNNLAVIAKGPLNAYSYQPQDVVSCVVCSI.

A compositionally biased stretch (low complexity) spans 1 to 14 (DTGPQGPQGVAGPP). Triple-helical region stretches follow at residues 1-23 (DTGP…KGDK) and 40-210 (GPPG…NGAV). A disordered region spans residues 1 to 207 (DTGPQGPQGV…QGPQGAPGSN (207 aa)). Residues 28-45 (YPPPPTCPTCPAGPPGAP) are compositionally biased toward pro residues. Low complexity-rich tracts occupy residues 75-90 (PGND…PGYD) and 99-110 (TGAPGPQGPKGD). Basic and acidic residues predominate over residues 138 to 149 (DGQDGAKGDKGD). 2 stretches are compositionally biased toward low complexity: residues 150 to 168 (QGPA…QGPA) and 189 to 201 (QGPK…QGPQ).

The protein localises to the secreted. It localises to the extracellular space. Its subcellular location is the extracellular matrix. The polypeptide is Short-chain collagen C4 (Ephydatia muelleri (Mueller's freshwater sponge)).